Here is a 162-residue protein sequence, read N- to C-terminus: Small ribosomal subunit protein uS19 (162 aa).

The segment covering 1-27 (MAKQKKFSGKGSARSKRKQNRKQVGPR) has biased composition (basic residues). The segment at 1-29 (MAKQKKFSGKGSARSKRKQNRKQVGPRRR) is disordered.

It belongs to the universal ribosomal protein uS19 family.

Protein S19 forms a complex with S13 that binds strongly to the 16S ribosomal RNA. The polypeptide is Small ribosomal subunit protein uS19 (Methanococcus aeolicus (strain ATCC BAA-1280 / DSM 17508 / OCM 812 / Nankai-3)).